We begin with the raw amino-acid sequence, 172 residues long: Mitochondrial import inner membrane translocase subunit Tim17-B (172 aa).

A disulfide bridge connects residues cysteine 9 and cysteine 78. 3 consecutive transmembrane segments (helical) span residues 17-37, 61-77, and 113-133; these read CGGA…IKGF, QIGG…STID, and VGSA…GILL. Residues 147-172 form a disordered region; the sequence is FLEDPSQLTPKEGSPAPGYPNYQQYH.

It belongs to the Tim17/Tim22/Tim23 family. As to quaternary structure, component of the TIM23 complex at least composed of TIMM23, TIMM17 (TIMM17A or TIMM17B) and TIMM50. The complex interacts with the TIMM44 component of the PAM complex. The complex also interacts with DNAJC15.

It is found in the mitochondrion inner membrane. Essential component of the TIM23 complex, a complex that mediates the translocation of transit peptide-containing proteins across the mitochondrial inner membrane. This chain is Mitochondrial import inner membrane translocase subunit Tim17-B (Timm17b), found in Mus musculus (Mouse).